A 287-amino-acid chain; its full sequence is Phosphatidylglycerol--prolipoprotein diacylglyceryl transferase (287 aa).

Transmembrane regions (helical) follow at residues 26–46, 71–91, 106–126, and 132–152; these read VAIR…WWLA, FLVW…ILFY, IWRG…AMIV, and GLPV…GLFF. A 1,2-diacyl-sn-glycero-3-phospho-(1'-sn-glycerol) is bound at residue Arg154. Transmembrane regions (helical) follow at residues 187-207, 217-237, and 251-271; these read SQLY…QVLA, GVIS…VEFF, and WLTM…WAIW.

This sequence belongs to the Lgt family.

The protein resides in the cell inner membrane. It carries out the reaction L-cysteinyl-[prolipoprotein] + a 1,2-diacyl-sn-glycero-3-phospho-(1'-sn-glycerol) = an S-1,2-diacyl-sn-glyceryl-L-cysteinyl-[prolipoprotein] + sn-glycerol 1-phosphate + H(+). Its pathway is protein modification; lipoprotein biosynthesis (diacylglyceryl transfer). In terms of biological role, catalyzes the transfer of the diacylglyceryl group from phosphatidylglycerol to the sulfhydryl group of the N-terminal cysteine of a prolipoprotein, the first step in the formation of mature lipoproteins. This is Phosphatidylglycerol--prolipoprotein diacylglyceryl transferase from Allorhizobium ampelinum (strain ATCC BAA-846 / DSM 112012 / S4) (Agrobacterium vitis (strain S4)).